The chain runs to 149 residues: Transcription antitermination protein NusB (149 aa).

Belongs to the NusB family.

Involved in transcription antitermination. Required for transcription of ribosomal RNA (rRNA) genes. Binds specifically to the boxA antiterminator sequence of the ribosomal RNA (rrn) operons. The chain is Transcription antitermination protein NusB from Chromobacterium violaceum (strain ATCC 12472 / DSM 30191 / JCM 1249 / CCUG 213 / NBRC 12614 / NCIMB 9131 / NCTC 9757 / MK).